Consider the following 373-residue polypeptide: Cobalt-precorrin-5B C(1)-methyltransferase (373 aa).

This sequence belongs to the CbiD family.

It catalyses the reaction Co-precorrin-5B + S-adenosyl-L-methionine = Co-precorrin-6A + S-adenosyl-L-homocysteine. The protein operates within cofactor biosynthesis; adenosylcobalamin biosynthesis; cob(II)yrinate a,c-diamide from sirohydrochlorin (anaerobic route): step 6/10. Its function is as follows. Catalyzes the methylation of C-1 in cobalt-precorrin-5B to form cobalt-precorrin-6A. The protein is Cobalt-precorrin-5B C(1)-methyltransferase of Listeria monocytogenes serovar 1/2a (strain ATCC BAA-679 / EGD-e).